The primary structure comprises 335 residues: Arylacetonitrilase (335 aa).

One can recognise a CN hydrolase domain in the interval 6 to 291 (LKVAITQAQP…EGIVYADLDM (286 aa)). The active-site Proton acceptor is E46. Residue K127 is part of the active site. C168 acts as the Nucleophile in catalysis.

It belongs to the carbon-nitrogen hydrolase superfamily. Nitrilase family.

It catalyses the reaction a nitrile + 2 H2O = a carboxylate + NH4(+). The enzyme catalyses 4-chlorophenylacetonitrile + 2 H2O = 4-chlorophenylacetate + NH4(+). In terms of biological role, nitrilase that hydrolyzes preferentially phenylacetonitrile, (R,S)-mandelonitrile, and 3-indolylacetonitrile. The polypeptide is Arylacetonitrilase (Arthroderma benhamiae (strain ATCC MYA-4681 / CBS 112371) (Trichophyton mentagrophytes)).